Reading from the N-terminus, the 129-residue chain is MKYFVVALALVAAFACIAESKPAESEHELAEVEEENELADLEDAVWLEHLADLSDLEEARGFFGNTWKKIKGKADKIMLKKAVKIMVKKEGIFKEEAQAKVDAMSKKQIRLYLLKYYGKKALQKASEKL.

A signal peptide spans 1-20 (MKYFVVALALVAAFACIAES). Positions 21–60 (KPAESEHELAEVEEENELADLEDAVWLEHLADLSDLEEAR) are excised as a propeptide.

The protein belongs to the cationic peptide 06 (cytoinsectotoxin) family. In terms of tissue distribution, expressed by the venom gland.

Its subcellular location is the secreted. In terms of biological role, insecticidal, cytolytic and antimicrobial peptide. Forms voltage-dependent, ion-permeable channels in membranes. At high concentration causes cell membrane lysis. The sequence is that of M-zodatoxin-Lt8i (cit 1-6) from Lachesana tarabaevi (Spider).